A 495-amino-acid polypeptide reads, in one-letter code: Carotenoid 3,4-desaturase (495 aa).

The protein belongs to the carotenoid/retinoid oxidoreductase family.

The catalysed reaction is dihydroisopentenyldehydrorhodopin + A = isopentenyldehydrorhodopin + AH2. It carries out the reaction dihydrobisanhydrobacterioruberin + A = bisanhydrobacterioruberin + AH2. It participates in carotenoid biosynthesis. Functionally, involved in the biosynthesis of the acyclic C50 carotenoid bacterioruberin (BR). CrtD is involved in the desaturation reactions that form double bonds at C-3,4 of dihydroisopentenyldehydrorhodopin (DH-IDR) and C-3',4' of dihydrobisanhydrobacterioruberin (DH-BABR) to yield isopentenyld ehydrorhodopin (IDR) and bisanhydrobacterioruberin (BABR), respectively. The polypeptide is Carotenoid 3,4-desaturase (Haloarcula japonica (strain ATCC 49778 / DSM 6131 / JCM 7785 / NBRC 101032 / NCIMB 13157 / TR-1)).